We begin with the raw amino-acid sequence, 28 residues long: PNYKLTYFNLRGRAEISRYLFAYAGIKY.

One can recognise a GST N-terminal domain in the interval 1–28 (PNYKLTYFNLRGRAEISRYLFAYAGIKY). Tyrosine 7 contacts glutathione.

This sequence belongs to the GST superfamily. Sigma family. Homodimer.

It is found in the cytoplasm. The catalysed reaction is RX + glutathione = an S-substituted glutathione + a halide anion + H(+). Functionally, conjugation of reduced glutathione to a wide number of exogenous and endogenous hydrophobic electrophiles. The polypeptide is Glutathione S-transferase 5 (Gallus gallus (Chicken)).